The primary structure comprises 158 residues: 6,7-dimethyl-8-ribityllumazine synthase (158 aa).

5-amino-6-(D-ribitylamino)uracil is bound by residues phenylalanine 23, 61–63 (SFE), and 85–87 (AVI). 90–91 (ET) is a (2S)-2-hydroxy-3-oxobutyl phosphate binding site. The Proton donor role is filled by histidine 93. Residue phenylalanine 118 coordinates 5-amino-6-(D-ribitylamino)uracil. Arginine 132 contacts (2S)-2-hydroxy-3-oxobutyl phosphate.

It belongs to the DMRL synthase family.

The catalysed reaction is (2S)-2-hydroxy-3-oxobutyl phosphate + 5-amino-6-(D-ribitylamino)uracil = 6,7-dimethyl-8-(1-D-ribityl)lumazine + phosphate + 2 H2O + H(+). It participates in cofactor biosynthesis; riboflavin biosynthesis; riboflavin from 2-hydroxy-3-oxobutyl phosphate and 5-amino-6-(D-ribitylamino)uracil: step 1/2. Its function is as follows. Catalyzes the formation of 6,7-dimethyl-8-ribityllumazine by condensation of 5-amino-6-(D-ribitylamino)uracil with 3,4-dihydroxy-2-butanone 4-phosphate. This is the penultimate step in the biosynthesis of riboflavin. The sequence is that of 6,7-dimethyl-8-ribityllumazine synthase from Prochlorococcus marinus (strain AS9601).